The following is a 250-amino-acid chain: Small ribosomal subunit protein uS2 (250 aa).

This sequence belongs to the universal ribosomal protein uS2 family.

The sequence is that of Small ribosomal subunit protein uS2 from Delftia acidovorans (strain DSM 14801 / SPH-1).